A 253-amino-acid chain; its full sequence is MAEPHEIDPIHQFHIDRIIPLHFLGTDVSFTNAAFFMLVIVALASLVLLAGTRNHSLVPGRLQSIAEVSYEFIASTLQLSSGRDGMRFFPFVFSIFMFVFLANLIGLVPYTFTVTSQIAVTFGLAMIVIGTVVIYGLIKHGTHFLGIFAPSGVSPLLLPFMIMIEVISFISRPISLSIRLFANMLAGHITLKVMGGFVAGLLGAGSVYALVAPLPLAMVVIFTAFELLVAFLQAYVFTILTCVYLNDAVHPGH.

6 consecutive transmembrane segments (helical) span residues 30–50, 88–108, 118–138, 144–164, 184–204, and 211–231; these read FTNA…VLLA, FFPF…IGLV, IAVT…YGLI, FLGI…MIMI, MLAG…LLGA, and VAPL…LVAF.

This sequence belongs to the ATPase A chain family. F-type ATPases have 2 components, CF(1) - the catalytic core - and CF(0) - the membrane proton channel. CF(1) has five subunits: alpha(3), beta(3), gamma(1), delta(1), epsilon(1). CF(0) has three main subunits: a(1), b(2) and c(9-12). The alpha and beta chains form an alternating ring which encloses part of the gamma chain. CF(1) is attached to CF(0) by a central stalk formed by the gamma and epsilon chains, while a peripheral stalk is formed by the delta and b chains.

Its subcellular location is the cell inner membrane. Functionally, key component of the proton channel; it plays a direct role in the translocation of protons across the membrane. The chain is ATP synthase subunit a from Beijerinckia indica subsp. indica (strain ATCC 9039 / DSM 1715 / NCIMB 8712).